A 64-amino-acid polypeptide reads, in one-letter code: Large ribosomal subunit protein bL33c (64 aa).

Belongs to the bacterial ribosomal protein bL33 family.

The protein localises to the plastid. It localises to the chloroplast. This Phaeodactylum tricornutum (strain CCAP 1055/1) protein is Large ribosomal subunit protein bL33c.